The chain runs to 224 residues: Octanoyl-[acyl-carrier-protein]:protein N-octanoyltransferase LIPT2, mitochondrial (224 aa).

Residues 37–217 form the BPL/LPL catalytic domain; that stretch reads SNIPNTLLLC…AFTEQFNCTL (181 aa). Residues 81-88, 147-149, and 160-162 contribute to the substrate site; these read RGGLITFH, AIG, and GLA. Cys-178 functions as the Acyl-thioester intermediate in the catalytic mechanism.

The protein belongs to the LipB family.

It localises to the mitochondrion. The enzyme catalyses octanoyl-[ACP] + L-lysyl-[protein] = N(6)-octanoyl-L-lysyl-[protein] + holo-[ACP] + H(+). The protein operates within protein modification; protein lipoylation via endogenous pathway; protein N(6)-(lipoyl)lysine from octanoyl-[acyl-carrier-protein]: step 1/2. Its function is as follows. Catalyzes the transfer of endogenously produced octanoic acid from octanoyl-acyl-carrier-protein (octanoyl-ACP) onto the lipoyl domains of lipoate-dependent enzymes such as the protein H of the glycine cleavage system (GCSH). Lipoyl-ACP can also act as a substrate although octanoyl-ACP is likely to be the physiological substrate. This chain is Octanoyl-[acyl-carrier-protein]:protein N-octanoyltransferase LIPT2, mitochondrial (lipt2), found in Danio rerio (Zebrafish).